We begin with the raw amino-acid sequence, 332 residues long: L-lactate dehydrogenase A chain (332 aa).

NAD(+)-binding positions include 29 to 57 (GAVGMACAISILMKDLADELALVDVVEDK) and Arg-99. Substrate contacts are provided by Arg-106, Asn-138, and Arg-169. Asn-138 contributes to the NAD(+) binding site. His-193 serves as the catalytic Proton acceptor. Thr-248 contacts substrate.

The protein belongs to the LDH/MDH superfamily. LDH family. Homotetramer.

It is found in the cytoplasm. It carries out the reaction (S)-lactate + NAD(+) = pyruvate + NADH + H(+). It functions in the pathway fermentation; pyruvate fermentation to lactate; (S)-lactate from pyruvate: step 1/1. Interconverts simultaneously and stereospecifically pyruvate and lactate with concomitant interconversion of NADH and NAD(+). In Alligator mississippiensis (American alligator), this protein is L-lactate dehydrogenase A chain (LDHA).